The primary structure comprises 148 residues: SsrA-binding protein (148 aa).

The interval 129-148 (ETEKDRDWQREKARLMREKA) is disordered.

It belongs to the SmpB family.

The protein localises to the cytoplasm. Its function is as follows. Required for rescue of stalled ribosomes mediated by trans-translation. Binds to transfer-messenger RNA (tmRNA), required for stable association of tmRNA with ribosomes. tmRNA and SmpB together mimic tRNA shape, replacing the anticodon stem-loop with SmpB. tmRNA is encoded by the ssrA gene; the 2 termini fold to resemble tRNA(Ala) and it encodes a 'tag peptide', a short internal open reading frame. During trans-translation Ala-aminoacylated tmRNA acts like a tRNA, entering the A-site of stalled ribosomes, displacing the stalled mRNA. The ribosome then switches to translate the ORF on the tmRNA; the nascent peptide is terminated with the 'tag peptide' encoded by the tmRNA and targeted for degradation. The ribosome is freed to recommence translation, which seems to be the essential function of trans-translation. In Ralstonia nicotianae (strain ATCC BAA-1114 / GMI1000) (Ralstonia solanacearum), this protein is SsrA-binding protein.